Here is a 162-residue protein sequence, read N- to C-terminus: AP-1 complex subunit sigma-1 (162 aa).

This sequence belongs to the adaptor complexes small subunit family. In terms of assembly, adaptor protein complex 1 (AP-1) is a heterotetramer composed of two large adaptins (gamma-type subunit apl4 and beta-type subunit apl2), a medium adaptin (mu-type subunit apm1) and a small adaptin (sigma-type subunit aps1). AP-1 interacts with clathrin.

It is found in the cytoplasm. It localises to the nucleus. The protein localises to the cytoplasmic vesicle. The protein resides in the clathrin-coated vesicle membrane. Its subcellular location is the endosome. It is found in the golgi apparatus. Functionally, component of the AP-1 complex which links clathrin to receptors in coated vesicles. Clathrin-associated protein complexes are believed to interact with the cytoplasmic tails of membrane proteins, leading to their selection and concentration. The polypeptide is AP-1 complex subunit sigma-1 (vas2) (Schizosaccharomyces pombe (strain 972 / ATCC 24843) (Fission yeast)).